The following is a 425-amino-acid chain: Septin-7 (425 aa).

Positions 28 to 297 (RGFEFTLMVV…ENYRSRKLAA (270 aa)) constitute a Septin-type G domain. Residues 38–45 (GESGLGKS) form a G1 motif region. GTP is bound by residues 38–45 (GESGLGKS), Thr71, Gly97, 176–184 (KADTLTPEE), Gly231, and Arg246. The tract at residues 94–97 (DTPG) is G3 motif. The tract at residues 175–178 (AKAD) is G4 motif. The stretch at 324-421 (LAQMEEERRE…SRTLEKNKKK (98 aa)) forms a coiled coil.

Belongs to the TRAFAC class TrmE-Era-EngA-EngB-Septin-like GTPase superfamily. Septin GTPase family. As to quaternary structure, monomer, and homodimer. Nucleotide binding promotes oligomerization. Can form heterooligomers with other family members and form filaments.

Its subcellular location is the cytoplasm. The protein resides in the chromosome. The protein localises to the centromere. It is found in the kinetochore. It localises to the cytoskeleton. Its subcellular location is the spindle. The protein resides in the cleavage furrow. The protein localises to the midbody. It is found in the cilium axoneme. Filament-forming cytoskeletal GTPase. Required for normal organization of the actin cytoskeleton. Required for normal progress through mitosis. Involved in cytokinesis. Plays a role in ciliogenesis and collective cell movements including convergent extension during gastrulation. Controls cell elongation but not polarization during convergent extension. In Xenopus laevis (African clawed frog), this protein is Septin-7.